The following is a 552-amino-acid chain: FERRY endosomal RAB5 effector complex subunit 3 (552 aa).

The tract at residues L383–A403 is disordered.

Component of the FERRY complex composed of five subunits, TBCK, PPP1R21, FERRY3, CRYZL1 and GATD1 with a ratio of 1:2:1:2:4, respectively.

The protein resides in the cytoplasm. The protein localises to the early endosome. Its function is as follows. Component of the FERRY complex (Five-subunit Endosomal Rab5 and RNA/ribosome intermediary). The FERRY complex directly interacts with mRNAs and RAB5A, and functions as a RAB5A effector involved in the localization and the distribution of specific mRNAs most likely by mediating their endosomal transport. The complex recruits mRNAs and ribosomes to early endosomes through direct mRNA-interaction. Plays a role in mast cell degranulation. The protein is FERRY endosomal RAB5 effector complex subunit 3 of Pongo abelii (Sumatran orangutan).